The sequence spans 360 residues: METKEFDSYSERKAFDETKTGVKGLIDAHITEIPRIFCLPQGSLSDKKPFVSTTDFAIPIIDFEGLHVSREDIVGKIKDAASNWGFFQVINHGVPLNVLQEIQDGVRRFHEEAPEVKKTYFTRDATKRFVYNSNFDLYSSSSCVNWRDSFACYMAPDPPNPEDLPVACRVAMFEYSKHMMRLGDLLFELLSEALGLRSDKLKSMDCMKGLLLLCHYYPPCPQPDLTIGTNNHSDNSFLTILLQDQIGGLQIFHQDCWVDVSPIPGALVINMGDFLQLITNDKVISVEHRVLANRAATPRISVASFFSTSMRPNSTVYGPIKELLSEENPSKYRVIDLKEYTEGYFKKGLDGTSYLSHYKI.

The 102-residue stretch at 208-309 (KGLLLLCHYY…ISVASFFSTS (102 aa)) folds into the Fe2OG dioxygenase domain. Residues His-232, Asp-234, and His-288 each contribute to the Fe cation site. 2-oxoglutarate is bound at residue Arg-299.

This sequence belongs to the iron/ascorbate-dependent oxidoreductase family. Fe(2+) is required as a cofactor. Constitutively expressed in leaves and blades.

The chain is 1-aminocyclopropane-1-carboxylate oxidase homolog 6 from Arabidopsis thaliana (Mouse-ear cress).